We begin with the raw amino-acid sequence, 613 residues long: Sulfhydryl oxidase 1 (613 aa).

Positions 1-30 (MTGCGRRSGWLPPLRLLLLPLLLGGPGVGA) are cleaved as a signal peptide. Residues 37 to 157 (YSASDPLTLL…RERLIDALES (121 aa)) enclose the Thioredoxin domain. Active-site nucleophile residues include cysteine 71 and cysteine 74. 2 disulfides stabilise this stretch: cysteine 71–cysteine 74 and cysteine 102–cysteine 111. Asparagine 131 and asparagine 244 each carry an N-linked (GlcNAc...) asparagine glycan. The cysteines at positions 394 and 406 are disulfide-linked. The region spanning 397 to 504 (SESHFRGFPC…EDPQFPKVQW (108 aa)) is the ERV/ALR sulfhydryl oxidase domain. Residues arginine 402, tryptophan 409, and histidine 413 each contribute to the FAD site. Serine 427 is subject to Phosphoserine. Cysteine 450 and cysteine 453 are disulfide-bonded. Residues aspartate 452, histidine 456, 479–486 (WTSHNRVN), lysine 501, and tryptophan 504 each bind FAD. Cysteine 510 and cysteine 513 are joined by a disulfide.

The protein belongs to the quiescin-sulfhydryl oxidase (QSOX) family. Monomer. FAD is required as a cofactor. N-glycosylated. O-glycosylated on Thr and Ser residues. In terms of tissue distribution, detected in endometrium and in uterus glandular epithelial cells (at protein level). Expressed in testis, placenta, pancreas, lung, ovary, endometrium, but not in brain, liver and kidney tissues. Higher expression in epithelial cells.

Its subcellular location is the secreted. It carries out the reaction 2 R'C(R)SH + O2 = R'C(R)S-S(R)CR' + H2O2. Functionally, catalyzes the oxidation of sulfhydryl groups in peptide and protein thiols to disulfides with the reduction of oxygen to hydrogen peroxide. Plays a role in disulfide bond formation in a variety of extracellular proteins. In fibroblasts, required for normal incorporation of laminin into the extracellular matrix, and thereby for normal cell-cell adhesion and cell migration. The polypeptide is Sulfhydryl oxidase 1 (QSOX1) (Cavia porcellus (Guinea pig)).